The sequence spans 261 residues: uncharacterized protein (261 aa).

The signal sequence occupies residues 1 to 22 (MKYYGKCISYISILILTFFIGG). A lipid anchor (N-palmitoyl cysteine) is attached at Cys23. A lipid anchor (S-diacylglycerol cysteine) is attached at Cys23.

Belongs to the staphylococcal tandem lipoprotein family.

Its subcellular location is the cell membrane. This is an uncharacterized protein from Staphylococcus epidermidis (strain ATCC 12228 / FDA PCI 1200).